We begin with the raw amino-acid sequence, 317 residues long: MSVRLGIVMDPIARINFKKDSSLAMLLAAQARGWSLFYMEQQDLYQKAGVARGRMRPLKVFNDASRWFELEAESDQPLHELDVILMRKDPPFDNEFVYSTYLLEQAERAGALVVNRPQSLRDCNEKFFATQFTQCTPPTMVSRRSDILREFAAEHRDIILKPLDGMGGSSIFRHREGDPNLSVILETLTQHGSQQIMAQRYLPEIKDGDKRILMIDGEPVPYCLARIPAQGETRGNLAAGGRGVAQPLSERDRWIAAEVGPHLRERGLLFVGLDVIGDYLTEINVTSPTCIREIDQAFDTRIGDKLMDAIAAQLAAR.

Residues 126 to 311 (KFFATQFTQC…IGDKLMDAIA (186 aa)) enclose the ATP-grasp domain. 152 to 208 (AAEHRDIILKPLDGMGGSSIFRHREGDPNLSVILETLTQHGSQQIMAQRYLPEIKDG) serves as a coordination point for ATP. Mg(2+)-binding residues include E282 and N284.

The protein belongs to the prokaryotic GSH synthase family. Mg(2+) serves as cofactor. Mn(2+) is required as a cofactor.

The catalysed reaction is gamma-L-glutamyl-L-cysteine + glycine + ATP = glutathione + ADP + phosphate + H(+). The protein operates within sulfur metabolism; glutathione biosynthesis; glutathione from L-cysteine and L-glutamate: step 2/2. The chain is Glutathione synthetase from Pseudomonas aeruginosa (strain ATCC 15692 / DSM 22644 / CIP 104116 / JCM 14847 / LMG 12228 / 1C / PRS 101 / PAO1).